A 196-amino-acid chain; its full sequence is Large ribosomal subunit protein uL5 (196 aa).

It belongs to the universal ribosomal protein uL5 family. As to quaternary structure, part of the 50S ribosomal subunit; part of the 5S rRNA/L5/L18/L25 subcomplex. Contacts the 5S rRNA and the P site tRNA. Forms a bridge to the 30S subunit in the 70S ribosome.

In terms of biological role, this is one of the proteins that bind and probably mediate the attachment of the 5S RNA into the large ribosomal subunit, where it forms part of the central protuberance. In the 70S ribosome it contacts protein S13 of the 30S subunit (bridge B1b), connecting the 2 subunits; this bridge is implicated in subunit movement. Contacts the P site tRNA; the 5S rRNA and some of its associated proteins might help stabilize positioning of ribosome-bound tRNAs. The chain is Large ribosomal subunit protein uL5 from Prosthecochloris aestuarii (strain DSM 271 / SK 413).